A 318-amino-acid polypeptide reads, in one-letter code: Thymidylate synthase (318 aa).

Residues R25 and 180 to 181 (RR) contribute to the dUMP site. The Nucleophile role is filled by C200. Residues 220–223 (RSGD), N231, and 261–263 (HIY) contribute to the dUMP site. A (6R)-5,10-methylene-5,6,7,8-tetrahydrofolate-binding site is contributed by D223. Residue A317 participates in (6R)-5,10-methylene-5,6,7,8-tetrahydrofolate binding.

The protein belongs to the thymidylate synthase family. Bacterial-type ThyA subfamily. Homodimer.

It is found in the cytoplasm. It carries out the reaction dUMP + (6R)-5,10-methylene-5,6,7,8-tetrahydrofolate = 7,8-dihydrofolate + dTMP. Its pathway is pyrimidine metabolism; dTTP biosynthesis. Its function is as follows. Catalyzes the reductive methylation of 2'-deoxyuridine-5'-monophosphate (dUMP) to 2'-deoxythymidine-5'-monophosphate (dTMP) while utilizing 5,10-methylenetetrahydrofolate (mTHF) as the methyl donor and reductant in the reaction, yielding dihydrofolate (DHF) as a by-product. This enzymatic reaction provides an intracellular de novo source of dTMP, an essential precursor for DNA biosynthesis. In Bacillus cereus (strain ATCC 10987 / NRS 248), this protein is Thymidylate synthase.